We begin with the raw amino-acid sequence, 87 residues long: Putative acyl-CoA-binding protein (87 aa).

The ACB domain occupies 1 to 86; it reads MSSTFEQAAA…VDELKTKYGM (86 aa). Residues Lys-13, 28 to 32, Lys-50, Lys-54, and Tyr-73 each bind an acyl-CoA; that span reads YALFK.

This sequence belongs to the ACBP family.

It is found in the cytoplasm. The protein localises to the nucleus. Its function is as follows. Binds medium- and long-chain acyl-CoA esters with very high affinity and may function as an intracellular carrier of acyl-CoA esters. May enhance the activity of the ceramide synthase complex. In Schizosaccharomyces pombe (strain 972 / ATCC 24843) (Fission yeast), this protein is Putative acyl-CoA-binding protein.